A 150-amino-acid chain; its full sequence is MRVWIDADACPKAAKDLIVKFALKRKLEVVMVAGQPQIKPAFACVRLIVVPSGMDAADDYLVENAVPGELVICSDVPLADRLIKKGVAALDPRGREFDERNMGERLAVRNLFTELREQGQVGGGQAPYGEREKQAFANALDRILTRLAKG.

This sequence belongs to the UPF0178 family.

The sequence is that of UPF0178 protein PSEEN5341 from Pseudomonas entomophila (strain L48).